Here is a 412-residue protein sequence, read N- to C-terminus: MSGPTLLKESGPREVFCGLTSIVWLHRRMPDAFFLVVGSRTCAHLIQSAAGVMIFAEPRFGTAILNERDLAGLADAQEELDRVAKELLQRRPEIRTLFLVGSCPSEVIKLDLSRAAERLTDELQGRVRVVNYSGSGIETTFTQGEDGALAALIPFLPSSDERQLLLVGTLADAVEDRLVHLFNKLNINAIKSLPPRQSTDLPAVGPGTTVLLTQPYLTTTARLLKDRGARVLTAPFPLGAEGSRRWMETAARDFEVDEAQIDSVLSPLMERAQIALAPHREVLKGKRIFLLPESQLELPLARFLQRECGMELVEVGTPYLNRDQMAEEIALLPEGTPVMEGQHVELQLDRVRDSKPDLVVCGMGLANPLEAEGIATKWSIELVFSPIHGIDQAGELAELFSRPLRRHQLLAH.

[4Fe-4S] cluster-binding residues include cysteine 17, cysteine 42, and cysteine 103.

This sequence belongs to the BchN/ChlN family. As to quaternary structure, protochlorophyllide reductase is composed of three subunits; ChlL, ChlN and ChlB. Forms a heterotetramer of two ChlB and two ChlN subunits. It depends on [4Fe-4S] cluster as a cofactor.

It catalyses the reaction chlorophyllide a + oxidized 2[4Fe-4S]-[ferredoxin] + 2 ADP + 2 phosphate = protochlorophyllide a + reduced 2[4Fe-4S]-[ferredoxin] + 2 ATP + 2 H2O. It functions in the pathway porphyrin-containing compound metabolism; chlorophyll biosynthesis (light-independent). Its function is as follows. Component of the dark-operative protochlorophyllide reductase (DPOR) that uses Mg-ATP and reduced ferredoxin to reduce ring D of protochlorophyllide (Pchlide) to form chlorophyllide a (Chlide). This reaction is light-independent. The NB-protein (ChlN-ChlB) is the catalytic component of the complex. The protein is Light-independent protochlorophyllide reductase subunit N of Synechococcus sp. (strain CC9902).